The following is a 164-amino-acid chain: MKSVITTTISAADAAGRFPSSSDLESVQGNIQRAAARLEAAEKLASNHEAVVKEAGDACFAKYSYLKNPGEAGDSQEKVNKCYRDVDHYMRLVNYCLVVGGTGPVDEWGIAGAREVYRTLNLPTSAYVASFAFARDRLCVPRDMSAQAGVEYAGNLDYLINALS.

2 residues coordinate (2R,3E)-phycoerythrobilin: Cys-82 and Cys-139.

This sequence belongs to the phycobiliprotein family. As to quaternary structure, heterodimer of an alpha and a beta chain. In terms of processing, contains two covalently linked bilin chromophores.

It localises to the plastid. It is found in the chloroplast thylakoid membrane. Functionally, light-harvesting photosynthetic bile pigment-protein from the phycobiliprotein complex. This chain is R-phycoerythrin alpha chain (cpeA), found in Pyropia tenera (Nori).